The primary structure comprises 597 residues: (E)-sabinene hydrate synthase, chloroplastic (597 aa).

The transit peptide at 1-47 directs the protein to the chloroplast; that stretch reads MSTISINHVGILRNPLQCKNKRTSINKPWSLSLPRSSPASRLVKPCR. Positions 353 and 357 each coordinate Mn(2+). The DDXXD motif motif lies at 353 to 357; it reads DDVYD. Homodimerization stretches follow at residues 359–365 and 431–468; these read YGTLDEL and EAGW…VSLP. The Mn(2+) site is built by Asp-495 and Glu-503.

It belongs to the terpene synthase family. Homodimer. Mn(2+) is required as a cofactor. Requires Mg(2+) as cofactor.

The protein localises to the plastid. The protein resides in the chloroplast. The catalysed reaction is (2E)-geranyl diphosphate + H2O = sabinene hydrate + diphosphate. It participates in secondary metabolite biosynthesis; terpenoid biosynthesis. Functionally, involved in the biosynthesis of phenolic monoterpenes natural products. Monoterpene synthase which catalyzes the conversion of geranyl diphosphate (GPP) to sabinene hydrate, specifically (E)-sabinene hydrate, and the formation of minor amounts and traces of several other monoterpenes (e.g. mainly alpha-pinene, limonene and alpha-terpineol). The chain is (E)-sabinene hydrate synthase, chloroplastic from Thymus vulgaris (Thyme).